Reading from the N-terminus, the 417-residue chain is Serine--tRNA ligase (417 aa).

226–228 (TSE) is an L-serine binding site. ATP contacts are provided by residues 257-259 (RRE) and Val273. Glu280 is a binding site for L-serine. 344–347 (ELTS) contacts ATP. Thr379 lines the L-serine pocket.

The protein belongs to the class-II aminoacyl-tRNA synthetase family. Type-1 seryl-tRNA synthetase subfamily. Homodimer. The tRNA molecule binds across the dimer.

It is found in the cytoplasm. The catalysed reaction is tRNA(Ser) + L-serine + ATP = L-seryl-tRNA(Ser) + AMP + diphosphate + H(+). It catalyses the reaction tRNA(Sec) + L-serine + ATP = L-seryl-tRNA(Sec) + AMP + diphosphate + H(+). Its pathway is aminoacyl-tRNA biosynthesis; selenocysteinyl-tRNA(Sec) biosynthesis; L-seryl-tRNA(Sec) from L-serine and tRNA(Sec): step 1/1. Catalyzes the attachment of serine to tRNA(Ser). Is also able to aminoacylate tRNA(Sec) with serine, to form the misacylated tRNA L-seryl-tRNA(Sec), which will be further converted into selenocysteinyl-tRNA(Sec). The sequence is that of Serine--tRNA ligase from Mycobacterium sp. (strain JLS).